We begin with the raw amino-acid sequence, 533 residues long: E3 ubiquitin-protein ligase arih1l (533 aa).

Disordered regions lie at residues 1–35 (MDSD…EAVD) and 48–73 (PAVA…QEDE). The segment at 158–369 (QDLPCQICYL…SAWYNCNRYN (212 aa)) is TRIAD supradomain. Positions 162, 165, 179, 181, 184, 187, 207, 212, 252, 257, 273, 275, 280, 283, 288, 293, 320, and 323 each coordinate Zn(2+). The RING-type 1 zinc finger occupies 162 to 212 (CQICYLNYPNSYFTGLECGHKFCMQCWGDYLTTKIIEEGMGQTISCPAHNC). An IBR-type zinc finger spans residues 232 to 293 (LKYQHLITNS…GENWHDPVKC (62 aa)). The RING-type 2; atypical zinc-finger motif lies at 320-351 (CPKCHVTIEKDGGCNHMVCRNQNCKAEFCWVC). Residue Cys-333 is part of the active site. Residues Cys-338, Cys-343, Cys-348, Cys-351, His-358, and Cys-365 each coordinate Zn(2+). A coiled-coil region spans residues 409-425 (KLYAQVKQKMEEMQQHN).

Belongs to the RBR family. Ariadne subfamily.

Its subcellular location is the cytoplasm. It carries out the reaction [E2 ubiquitin-conjugating enzyme]-S-ubiquitinyl-L-cysteine + [acceptor protein]-L-lysine = [E2 ubiquitin-conjugating enzyme]-L-cysteine + [acceptor protein]-N(6)-ubiquitinyl-L-lysine.. The protein operates within protein modification; protein ubiquitination. Functionally, E3 ubiquitin-protein ligase, which catalyzes polyubiquitination of target proteins together with ubiquitin-conjugating enzyme E2 ube2l3. The sequence is that of E3 ubiquitin-protein ligase arih1l (arih1l) from Danio rerio (Zebrafish).